A 212-amino-acid chain; its full sequence is 3-isopropylmalate dehydratase small subunit 2 (212 aa).

This sequence belongs to the LeuD family. LeuD type 1 subfamily. Heterodimer of LeuC and LeuD.

It catalyses the reaction (2R,3S)-3-isopropylmalate = (2S)-2-isopropylmalate. It participates in amino-acid biosynthesis; L-leucine biosynthesis; L-leucine from 3-methyl-2-oxobutanoate: step 2/4. Its function is as follows. Catalyzes the isomerization between 2-isopropylmalate and 3-isopropylmalate, via the formation of 2-isopropylmaleate. The polypeptide is 3-isopropylmalate dehydratase small subunit 2 (Chromobacterium violaceum (strain ATCC 12472 / DSM 30191 / JCM 1249 / CCUG 213 / NBRC 12614 / NCIMB 9131 / NCTC 9757 / MK)).